Consider the following 508-residue polypeptide: Glycogen synthase (508 aa).

ADP-alpha-D-glucose is bound at residue K27.

The protein belongs to the glycosyltransferase 1 family. Bacterial/plant glycogen synthase subfamily.

It catalyses the reaction [(1-&gt;4)-alpha-D-glucosyl](n) + ADP-alpha-D-glucose = [(1-&gt;4)-alpha-D-glucosyl](n+1) + ADP + H(+). The protein operates within glycan biosynthesis; glycogen biosynthesis. Its function is as follows. Synthesizes alpha-1,4-glucan chains using ADP-glucose. In Photobacterium profundum (strain SS9), this protein is Glycogen synthase.